Consider the following 466-residue polypeptide: Light-independent protochlorophyllide reductase subunit N (466 aa).

[4Fe-4S] cluster contacts are provided by Cys23, Cys48, and Cys108.

Belongs to the BchN/ChlN family. Protochlorophyllide reductase is composed of three subunits; ChlL, ChlN and ChlB. Forms a heterotetramer of two ChlB and two ChlN subunits. The cofactor is [4Fe-4S] cluster.

The enzyme catalyses chlorophyllide a + oxidized 2[4Fe-4S]-[ferredoxin] + 2 ADP + 2 phosphate = protochlorophyllide a + reduced 2[4Fe-4S]-[ferredoxin] + 2 ATP + 2 H2O. Its pathway is porphyrin-containing compound metabolism; chlorophyll biosynthesis (light-independent). In terms of biological role, component of the dark-operative protochlorophyllide reductase (DPOR) that uses Mg-ATP and reduced ferredoxin to reduce ring D of protochlorophyllide (Pchlide) to form chlorophyllide a (Chlide). This reaction is light-independent. The NB-protein (ChlN-ChlB) is the catalytic component of the complex. The sequence is that of Light-independent protochlorophyllide reductase subunit N from Synechococcus elongatus (strain ATCC 33912 / PCC 7942 / FACHB-805) (Anacystis nidulans R2).